A 150-amino-acid chain; its full sequence is Endoribonuclease YbeY (150 aa).

3 residues coordinate Zn(2+): His102, His106, and His112.

Belongs to the endoribonuclease YbeY family. The cofactor is Zn(2+).

It localises to the cytoplasm. Functionally, single strand-specific metallo-endoribonuclease involved in late-stage 70S ribosome quality control and in maturation of the 3' terminus of the 16S rRNA. In Thermotoga sp. (strain RQ2), this protein is Endoribonuclease YbeY.